The following is a 205-amino-acid chain: Endoplasmic reticulum membrane protein complex subunit 10 (205 aa).

Residues 1–17 (MLVRLLRVILLASMVFC) form the signal peptide. Topologically, residues 18–172 (ADILQLSYSD…VKEVSWFQKN (155 aa)) are lumenal. N47 carries N-linked (GlcNAc...) asparagine glycosylation. The helical transmembrane segment at 173-190 (WKMLLLGLLIYNFVAGSA) threads the bilayer. Residues 191 to 205 (KKQQQGGAGADQKTE) are Cytoplasmic-facing.

Component of the ER membrane protein complex (EMC).

The protein localises to the endoplasmic reticulum membrane. Part of the endoplasmic reticulum membrane protein complex (EMC) that enables the energy-independent insertion into endoplasmic reticulum membranes of newly synthesized membrane proteins. Preferentially accommodates proteins with transmembrane domains that are weakly hydrophobic or contain destabilizing features such as charged and aromatic residues. Involved in the cotranslational insertion of multi-pass membrane proteins in which stop-transfer membrane-anchor sequences become ER membrane spanning helices. It is also required for the post-translational insertion of tail-anchored/TA proteins in endoplasmic reticulum membranes. By mediating the proper cotranslational insertion of N-terminal transmembrane domains in an N-exo topology, with translocated N-terminus in the lumen of the ER, controls the topology of multi-pass membrane proteins. The protein is Endoplasmic reticulum membrane protein complex subunit 10 of Saccharomyces cerevisiae (strain ATCC 204508 / S288c) (Baker's yeast).